Here is a 314-residue protein sequence, read N- to C-terminus: Probable 2-(5''-triphosphoribosyl)-3'-dephosphocoenzyme-A synthase (314 aa).

This sequence belongs to the CitG/MdcB family.

It catalyses the reaction 3'-dephospho-CoA + ATP = 2'-(5''-triphospho-alpha-D-ribosyl)-3'-dephospho-CoA + adenine. In Photobacterium profundum (strain SS9), this protein is Probable 2-(5''-triphosphoribosyl)-3'-dephosphocoenzyme-A synthase.